Consider the following 143-residue polypeptide: 5-hydroxymethyl-dUMP N-hydrolase (143 aa).

Positions 7, 9, 10, 11, 77, 79, 83, and 107 each coordinate 5-hydroxymethyl-dUMP.

Belongs to the 2'-deoxynucleoside 5'-phosphate N-hydrolase 1 family. As to quaternary structure, monomer and homodimer.

It is found in the cytoplasm. Its subcellular location is the nucleus. It carries out the reaction 5-hydroxymethyl-dUMP + H2O = 5-hydroxymethyluracil + 2-deoxy-D-ribose 5-phosphate. In terms of biological role, part of a nucleotide salvage pathway that eliminates epigenetically modified 5-hydroxymethyl-dCMP (hmdCMP) in a two-step process entailing deamination to cytotoxic 5-hydroxymethyl-dUMP (hmdUMP), followed by its hydrolysis into 5-hydroxymethyluracil (hmU) and 2-deoxy-D-ribose 5-phosphate (deoxyribosephosphate). This is 5-hydroxymethyl-dUMP N-hydrolase (dnph1) from Danio rerio (Zebrafish).